Reading from the N-terminus, the 79-residue chain is D-alanyl carrier protein (79 aa).

Residues 1 to 77 (MDVKETILNI…KIISGVVELM (77 aa)) form the Carrier domain. Residue Ser35 is modified to O-(pantetheine 4'-phosphoryl)serine.

The protein belongs to the DltC family. 4'-phosphopantetheine is transferred from CoA to a specific serine of apo-DCP.

It localises to the cytoplasm. Its pathway is cell wall biogenesis; lipoteichoic acid biosynthesis. Carrier protein involved in the D-alanylation of lipoteichoic acid (LTA). The loading of thioester-linked D-alanine onto DltC is catalyzed by D-alanine--D-alanyl carrier protein ligase DltA. The DltC-carried D-alanyl group is further transferred to cell membrane phosphatidylglycerol (PG) by forming an ester bond, probably catalyzed by DltD. D-alanylation of LTA plays an important role in modulating the properties of the cell wall in Gram-positive bacteria, influencing the net charge of the cell wall. The sequence is that of D-alanyl carrier protein from Streptococcus suis (strain 05ZYH33).